A 540-amino-acid chain; its full sequence is uncharacterized protein (540 aa).

A chloroplast-targeting transit peptide spans 1 to 58; that stretch reads MAVSAFRGTRLPLFHHSQFPVARTVSGTSKKMIGARNFKGFVLTAQYSQTQDLFTSRL. Positions 195–533 constitute a Protein kinase domain; it reads YVDPTPIASA…ISIASNKRTN (339 aa). ATP contacts are provided by residues 201 to 209 and Lys224; that span reads IASASIAQV. Asp362 serves as the catalytic Proton acceptor.

Belongs to the protein kinase superfamily. ADCK protein kinase family.

The protein localises to the plastid. It localises to the chloroplast. It is found in the plastoglobule. This is an uncharacterized protein from Arabidopsis thaliana (Mouse-ear cress).